We begin with the raw amino-acid sequence, 272 residues long: Replication-associated protein A (272 aa).

In terms of domain architecture, CRESS-DNA virus Rep endonuclease spans 11 to 114; it reads SHRNANTFLT…PLAVFERGTF (104 aa). Positions 18 to 21 match the RCR-1 motif; sequence FLTY. 3 residues coordinate a divalent metal cation: glutamate 52, histidine 60, and histidine 62. Residues 60 to 62 carry the RCR-2 motif; it reads HLH. Catalysis depends on tyrosine 100, which acts as the For DNA cleavage activity. Residues 100-103 carry the RCR-3 motif; sequence YILK. Glutamate 104 lines the a divalent metal cation pocket. The segment at 175 to 187 is oligomerization; that stretch reads SANKLFPEIQEEF. The binding to RBR1 stretch occupies residues 198-202; it reads LLCNE. Positions 221–230 are transactivation; it reads MLLQPTCYTL. Positions 245 to 272 are disordered; it reads SHQMKDQESRASTSSAQQEPENLLGPEA. Residues 254–264 are compositionally biased toward polar residues; that stretch reads RASTSSAQQEP.

The protein belongs to the geminiviridae Rep protein family. In terms of assembly, homooligomer. Interacts with host retinoblastoma-related protein 1 (RBR1), and may thereby deregulate the host cell cycle. Part of the C- and V-complexes which are RepA-Rep-DNA complexes involved in the c-sense and v-sense transcription. It depends on Mg(2+) as a cofactor. Mn(2+) serves as cofactor.

It localises to the host nucleus. The protein resides in the host cytoplasm. Its function is as follows. Implicated in enhancement of V-sense gene expression. Acts a an inhibitor of C-sense gene transcription. This chain is Replication-associated protein A, found in Maize streak virus genotype A (isolate Nigeria) (MSV).